A 205-amino-acid chain; its full sequence is FMN-dependent NADH:quinone oxidoreductase (205 aa).

FMN-binding positions include Ser-10 and 16 to 18; that span reads SVS.

This sequence belongs to the azoreductase type 1 family. In terms of assembly, homodimer. The cofactor is FMN.

The enzyme catalyses 2 a quinone + NADH + H(+) = 2 a 1,4-benzosemiquinone + NAD(+). The catalysed reaction is N,N-dimethyl-1,4-phenylenediamine + anthranilate + 2 NAD(+) = 2-(4-dimethylaminophenyl)diazenylbenzoate + 2 NADH + 2 H(+). Quinone reductase that provides resistance to thiol-specific stress caused by electrophilic quinones. Functionally, also exhibits azoreductase activity. Catalyzes the reductive cleavage of the azo bond in aromatic azo compounds to the corresponding amines. The polypeptide is FMN-dependent NADH:quinone oxidoreductase (Agrobacterium fabrum (strain C58 / ATCC 33970) (Agrobacterium tumefaciens (strain C58))).